Consider the following 211-residue polypeptide: Redox-sensing transcriptional repressor Rex (211 aa).

The H-T-H motif DNA-binding region spans 16-55; the sequence is LYYRYLLILNEEGKDKVSSTELSEAVQVDSASIRRDFSYF. An NAD(+)-binding site is contributed by 90-95; that stretch reads GVGNLG.

It belongs to the transcriptional regulatory Rex family. In terms of assembly, homodimer.

It is found in the cytoplasm. Its function is as follows. Modulates transcription in response to changes in cellular NADH/NAD(+) redox state. The chain is Redox-sensing transcriptional repressor Rex from Lactobacillus acidophilus (strain ATCC 700396 / NCK56 / N2 / NCFM).